Consider the following 273-residue polypeptide: Putative phosphoenolpyruvate synthase regulatory protein (273 aa).

Ala-153 to Thr-160 provides a ligand contact to ADP.

This sequence belongs to the pyruvate, phosphate/water dikinase regulatory protein family. PSRP subfamily.

The enzyme catalyses [pyruvate, water dikinase] + ADP = [pyruvate, water dikinase]-phosphate + AMP + H(+). It carries out the reaction [pyruvate, water dikinase]-phosphate + phosphate + H(+) = [pyruvate, water dikinase] + diphosphate. Its function is as follows. Bifunctional serine/threonine kinase and phosphorylase involved in the regulation of the phosphoenolpyruvate synthase (PEPS) by catalyzing its phosphorylation/dephosphorylation. This chain is Putative phosphoenolpyruvate synthase regulatory protein, found in Xylella fastidiosa (strain M23).